The primary structure comprises 217 residues: 3,4-dihydroxy-2-butanone 4-phosphate synthase (217 aa).

Residues 37–38, Asp-42, 150–154, and Glu-174 contribute to the D-ribulose 5-phosphate site; these read RE and RRGHT. Glu-38 contributes to the Mg(2+) binding site. His-153 lines the Mg(2+) pocket.

This sequence belongs to the DHBP synthase family. Homodimer. Requires Mg(2+) as cofactor. Mn(2+) serves as cofactor.

It carries out the reaction D-ribulose 5-phosphate = (2S)-2-hydroxy-3-oxobutyl phosphate + formate + H(+). It participates in cofactor biosynthesis; riboflavin biosynthesis; 2-hydroxy-3-oxobutyl phosphate from D-ribulose 5-phosphate: step 1/1. Its function is as follows. Catalyzes the conversion of D-ribulose 5-phosphate to formate and 3,4-dihydroxy-2-butanone 4-phosphate. The chain is 3,4-dihydroxy-2-butanone 4-phosphate synthase from Shewanella putrefaciens (strain CN-32 / ATCC BAA-453).